The following is a 539-amino-acid chain: Nucleoporin NUP60 (539 aa).

S10, S49, S81, and S89 each carry phosphoserine. Positions 44-80 (DSARVSPRNNVANKQPRNESFNRRISSMPGGYFHSEI) are disordered. A coiled-coil region spans residues 91 to 118 (VVSAVGEARNDIENKEEEYDETHETNIS). Phosphoserine is present on residues S162, S171, S214, and S222. 2 stretches are compositionally biased toward polar residues: residues 242–252 (TANTSAQSIAS) and 258–267 (SGVSKSAPSK). Disordered stretches follow at residues 242-267 (TANTSAQSIASAKSVRSGVSKSAPSK), 305-329 (IRKHKRVSPNAAPRQEISEEETTVK), and 347-493 (NATK…GKHI). The span at 347 to 359 (NATKISPSAPSKD) shows a compositional bias: polar residues. S352, S360, S374, and S382 each carry phosphoserine. 2 stretches are compositionally biased toward polar residues: residues 395–433 (SAFNFSFNTSRNVEPTENAYKSENAPSASSKEFNFTNLQ) and 448–485 (GDSTPVQPDLSVTPQKSSSKGFVFNSVQKKSRSNLSQE). FXF repeat units lie at residues 399 to 401 (FSF) and 427 to 429 (FNF). T460 carries the post-translational modification Phosphothreonine. The FXF 3 repeat unit spans residues 469-471 (FVF). Phosphoserine occurs at positions 480 and 483. One copy of the FXF 4 repeat lies at 509–511 (FDF).

Component of the nuclear pore complex (NPC). NPC constitutes the exclusive means of nucleocytoplasmic transport. NPCs allow the passive diffusion of ions and small molecules and the active, nuclear transport receptor-mediated bidirectional transport of macromolecules such as proteins, RNAs, ribonucleoparticles (RNPs), and ribosomal subunits across the nuclear envelope. Due to its 8-fold rotational symmetry, all subunits are present with 8 copies or multiples thereof. Binds to NUP1 and NUP2 forming the nuclear basket and the distal ring. The interaction with NUP2 is GSP1-GTP-dependent. Interacts through its FG repeats with karyopherins, such as KAP123 and KAP95-SRP1 (KAP60). Also interacts with GSP1-GTP and SRM1 (PRP20), where NUP60 reduces SRM1 activity, thus inhibiting GSP1 guanine nucleotide dissociation. In terms of processing, phosphorylated by CDC28.

It localises to the nucleus. The protein localises to the nuclear pore complex. It is found in the nucleus membrane. Functions as a component of the nuclear pore complex (NPC). NPC components, collectively referred to as nucleoporins (NUPs), can play the role of both NPC structural components and of docking or interaction partners for transiently associated nuclear transport factors. Active directional transport is assured by both, a Phe-Gly (FG) repeat affinity gradient for these transport factors across the NPC and a transport cofactor concentration gradient across the nuclear envelope (GSP1 and GSP2 GTPases associated predominantly with GTP in the nucleus, with GDP in the cytoplasm). The chain is Nucleoporin NUP60 (NUP60) from Saccharomyces cerevisiae (strain ATCC 204508 / S288c) (Baker's yeast).